Consider the following 642-residue polypeptide: Mini-chromosome maintenance complex-binding protein (642 aa).

The span at 151 to 161 (ARVSPSTSYTP) shows a compositional bias: polar residues. The tract at residues 151-188 (ARVSPSTSYTPSRHKRSYEDDEDMDLQPNKQKDQHMGA) is disordered. Serine 154 carries the post-translational modification Phosphoserine. Threonine 160 carries the phosphothreonine modification. 2 positions are modified to phosphoserine: serine 167 and serine 298.

The protein belongs to the MCMBP family. Interacts with the MCM complex: associates with the MCM3-7 complex which lacks MCM2, while it does not interact with the MCM complex when MCM2 is present (MCM2-7 complex). Interacts with the RPA complex, when composed of all RPA1, RPA2 and RPA3 components, but not with RPA1 or RPA2 alone.

The protein resides in the nucleus. In terms of biological role, associated component of the MCM complex that acts as a regulator of DNA replication. Binds to the MCM complex during late S phase and promotes the disassembly of the MCM complex from chromatin, thereby acting as a key regulator of pre-replication complex (pre-RC) unloading from replicated DNA. Can dissociate the MCM complex without addition of ATP; probably acts by destabilizing interactions of each individual subunits of the MCM complex. Required for sister chromatid cohesion. This chain is Mini-chromosome maintenance complex-binding protein (MCMBP), found in Bos taurus (Bovine).